The chain runs to 367 residues: tRNA/tmRNA (uracil-C(5))-methyltransferase (367 aa).

Residues glutamine 190, tyrosine 218, asparagine 223, glutamate 239, and aspartate 299 each contribute to the S-adenosyl-L-methionine site. Catalysis depends on cysteine 324, which acts as the Nucleophile. Catalysis depends on glutamate 358, which acts as the Proton acceptor.

This sequence belongs to the class I-like SAM-binding methyltransferase superfamily. RNA M5U methyltransferase family. TrmA subfamily.

It carries out the reaction uridine(54) in tRNA + S-adenosyl-L-methionine = 5-methyluridine(54) in tRNA + S-adenosyl-L-homocysteine + H(+). The enzyme catalyses uridine(341) in tmRNA + S-adenosyl-L-methionine = 5-methyluridine(341) in tmRNA + S-adenosyl-L-homocysteine + H(+). In terms of biological role, dual-specificity methyltransferase that catalyzes the formation of 5-methyluridine at position 54 (m5U54) in all tRNAs, and that of position 341 (m5U341) in tmRNA (transfer-mRNA). The chain is tRNA/tmRNA (uracil-C(5))-methyltransferase from Musicola paradisiaca (strain Ech703) (Dickeya paradisiaca).